The sequence spans 500 residues: Cytochrome P450 71B37 (500 aa).

A helical membrane pass occupies residues 2 to 22 (ATIWFLPLLFLSCLLLAALRL). Residue cysteine 440 coordinates heme.

It belongs to the cytochrome P450 family. Heme serves as cofactor.

Its subcellular location is the membrane. The protein is Cytochrome P450 71B37 (CYP71B37) of Arabidopsis thaliana (Mouse-ear cress).